Reading from the N-terminus, the 292-residue chain is Formamidopyrimidine-DNA glycosylase (292 aa).

Residue Pro2 is the Schiff-base intermediate with DNA of the active site. The active-site Proton donor is Glu3. Lys60 serves as the catalytic Proton donor; for beta-elimination activity. Residues His109, Arg128, and Lys173 each coordinate DNA. The FPG-type zinc-finger motif lies at 258–292; that stretch reads NVYRRTGKKCRQCKNLIERQKISGRSTHWCRKCQK. Arg282 acts as the Proton donor; for delta-elimination activity in catalysis.

This sequence belongs to the FPG family. In terms of assembly, monomer. Requires Zn(2+) as cofactor.

The enzyme catalyses Hydrolysis of DNA containing ring-opened 7-methylguanine residues, releasing 2,6-diamino-4-hydroxy-5-(N-methyl)formamidopyrimidine.. It carries out the reaction 2'-deoxyribonucleotide-(2'-deoxyribose 5'-phosphate)-2'-deoxyribonucleotide-DNA = a 3'-end 2'-deoxyribonucleotide-(2,3-dehydro-2,3-deoxyribose 5'-phosphate)-DNA + a 5'-end 5'-phospho-2'-deoxyribonucleoside-DNA + H(+). Its function is as follows. Involved in base excision repair of DNA damaged by oxidation or by mutagenic agents. Acts as a DNA glycosylase that recognizes and removes damaged bases. Has a preference for oxidized purines, such as 7,8-dihydro-8-oxoguanine (8-oxoG). Has AP (apurinic/apyrimidinic) lyase activity and introduces nicks in the DNA strand. Cleaves the DNA backbone by beta-delta elimination to generate a single-strand break at the site of the removed base with both 3'- and 5'-phosphates. The sequence is that of Formamidopyrimidine-DNA glycosylase from Prochlorococcus marinus subsp. pastoris (strain CCMP1986 / NIES-2087 / MED4).